A 630-amino-acid polypeptide reads, in one-letter code: PR domain zinc finger protein 5 (630 aa).

The region spanning 8–124 (DRFSLKSSRV…TDTELLIGYL (117 aa)) is the SET domain. The segment at 167–190 (YACPQCESSFTSEDILAEHLQTLH) adopts a C2H2-type 1 zinc-finger fold. The segment at 199 to 221 (FKCKNCGKKFPVKQALQRHVLQC) adopts a C2H2-type 2; atypical zinc-finger fold. The C2H2-type 3; atypical zinc-finger motif lies at 234 to 256 (FQCSVCNSSFSSASSFEQHQETC). 13 consecutive C2H2-type zinc fingers follow at residues 262 to 287 (FVCKADSCGKRLKSKDALKRHQENVH), 295 to 317 (LICSVCNKKCSSASSLQEHRKIH), 320 to 342 (FDCQECMKKFISANQLKRHMITH), 348 to 370 (YNCEICNKSFKRLDQVGAHKVIH), 376 to 398 (YKCKLCGKGFAHRNVYKNHKKTH), 404 to 426 (FQCEECKALFRTPFSLQRHLLIH), 432 to 455 (FKCHHCDATFKRKDTLNVHVQVVH), 461 to 483 (YRCELCNKAFVTPSVLRSHKKTH), 489 to 511 (KICPYCGQKFASSGTLRVHIRSH), 517 to 539 (YQCPYCEKGFSKNDGLKMHIRTH), 545 to 567 (YKCSECSKAFSQKRGLDEHKRTH), 573 to 595 (FQCDVCDLAFSLKKMLIRHKMTH), and 602 to 625 (AECQFCHKKFTRNDYLKVHMDNIH).

Belongs to the class V-like SAM-binding methyltransferase superfamily. Interacts with EHMT2/G9A, GFI1 and HDAC1. In terms of tissue distribution, widely expressed with highest levels in colon and ovary. Tends to be silenced in breast, colorectal, gastric and liver cancer tissues.

It is found in the nucleus. Its function is as follows. Sequence-specific DNA-binding transcription factor. Represses transcription at least in part by recruitment of the histone methyltransferase EHMT2/G9A and histone deacetylases such as HDAC1. Regulates hematopoiesis-associated protein-coding and microRNA (miRNA) genes. May regulate the expression of proteins involved in extracellular matrix development and maintenance, including fibrillar collagens, such as COL4A1 and COL11A1, connective tissue components, such as HAPLN1, and molecules regulating cell migration and adhesion, including EDIL3 and TGFB2. May cause G2/M arrest and apoptosis in cancer cells. The chain is PR domain zinc finger protein 5 (PRDM5) from Homo sapiens (Human).